Here is a 573-residue protein sequence, read N- to C-terminus: Heat shock protein 60A (573 aa).

Residues 1-57 constitute a mitochondrion transit peptide; that stretch reads MFRLPVSLARSSISRQLAMRGYAKDVRFGPEVRAMMLQGVDVLADAVAVTMGPKGRN.

The protein belongs to the chaperonin (HSP60) family.

The protein localises to the mitochondrion matrix. In terms of biological role, prevents misfolding and promotes the refolding and proper assembly of unfolded polypeptides generated under stress conditions. This chain is Heat shock protein 60A, found in Drosophila melanogaster (Fruit fly).